The primary structure comprises 678 residues: Protein CASP (678 aa).

Residues Met1 to Thr619 lie on the Cytoplasmic side of the membrane. Coiled coils occupy residues Asp16–Gln40, Leu67–Ser374, His427–Ser454, and Leu502–Ser556. Position 586 is a phosphoserine (Ser586). A helical; Anchor for type IV membrane protein transmembrane segment spans residues Ile620–Ala640. The Lumenal portion of the chain corresponds to Trp641–Gln678.

The protein belongs to the CASP family. In terms of assembly, homodimer; disulfide-linked. Interacts with GOLGA5. In terms of tissue distribution, ubiquitously expressed.

It localises to the golgi apparatus membrane. May be involved in intra-Golgi retrograde transport. In Mus musculus (Mouse), this protein is Protein CASP (Cux1).